The sequence spans 448 residues: High mobility group B protein 15 (448 aa).

An ARID domain is found at 29-120 (VADPRLFMTS…LLNNYEQIYF (92 aa)). The segment covering 219–236 (PQQSHGVLPNTLNISANP) has biased composition (polar residues). 3 disordered regions span residues 219–270 (PQQS…RSGY), 333–352 (KKNG…LPEQ), and 366–448 (VEED…AEQN). Residues 244 to 255 (TKRRRRRKKSEI) are compositionally biased toward basic residues. A DNA-binding region (HMG box) is located at residues 263–330 (PKPNRSGYNF…RYRTEMEDYR (68 aa)). The span at 389 to 398 (SIETDPELEE) shows a compositional bias: acidic residues. Over residues 399 to 412 (PSLNPSGPNLNPNP) the composition is skewed to low complexity.

It belongs to the HMGB family.

It localises to the nucleus. Binds preferentially DNA with A/T-rich content. The polypeptide is High mobility group B protein 15 (HMGB15) (Arabidopsis thaliana (Mouse-ear cress)).